Reading from the N-terminus, the 59-residue chain is Large ribosomal subunit protein uL30 (59 aa).

This sequence belongs to the universal ribosomal protein uL30 family. As to quaternary structure, part of the 50S ribosomal subunit.

This chain is Large ribosomal subunit protein uL30, found in Geobacter metallireducens (strain ATCC 53774 / DSM 7210 / GS-15).